Consider the following 501-residue polypeptide: L-lysine transport protein (501 aa).

13 consecutive transmembrane segments (helical) span residues 25–41, 52–76, 92–113, 138–155, 174–191, 214–232, 247–269, 292–316, 340–362, 377–393, 424–440, 447–463, and 477–495; these read LIAL…IFSI, GAML…HVLA, VGLG…SVIA, FVSA…FGVV, ILPL…GFSW, GIMV…ASVY, VIGF…GVLT, WGAA…QMLC, GAAW…IFFL, LYLV…VMLA, LIVG…LFYA, LFGA…YVWT, and IGVV…IGLV.

The protein belongs to the amino acid-polyamine-organocation (APC) superfamily. Basic amino acid/polyamine antiporter (APA) (TC 2.A.3.2) family.

Its subcellular location is the cell membrane. Functionally, permease that is involved in the transport across the membrane of lysine. This Corynebacterium glutamicum (strain ATCC 13032 / DSM 20300 / JCM 1318 / BCRC 11384 / CCUG 27702 / LMG 3730 / NBRC 12168 / NCIMB 10025 / NRRL B-2784 / 534) protein is L-lysine transport protein (lysI).